Here is a 362-residue protein sequence, read N- to C-terminus: Cyclic di-GMP phosphodiesterase PdeL (362 aa).

An HTH luxR-type domain is found at histidine 18–tyrosine 83. The segment at residues valine 42–lysine 61 is a DNA-binding region (H-T-H motif). Residues histidine 106 to alanine 360 enclose the EAL domain. A substrate-binding site is contributed by glutamine 127. Glutamate 141 is a Mg(2+) binding site. Residues valine 144–arginine 145 and asparagine 200 each bind substrate. Asparagine 200, glutamate 232, and aspartate 262 together coordinate Mg(2+). Residues aspartate 262, lysine 286, glutamate 319–glutamate 322, and tyrosine 341 contribute to the substrate site.

In terms of assembly, is in a fast thermodynamic monomer-homodimer equilibrium. Dimerization is required for PDE activity. Dimerization affinity is increased about 100-fold upon substrate binding. Requires Mg(2+) as cofactor. The cofactor is Mn(2+).

The catalysed reaction is 3',3'-c-di-GMP + H2O = 5'-phosphoguanylyl(3'-&gt;5')guanosine + H(+). Strongly inhibited by Ca(2+). Its function is as follows. Acts both as an enzyme and as a c-di-GMP sensor to couple transcriptional activity to the c-di-GMP status of the cell. Phosphodiesterase (PDE) that catalyzes the hydrolysis of cyclic-di-GMP (c-di-GMP) to 5'-pGpG. Also acts as a transcription factor to control its own expression. The protein is Cyclic di-GMP phosphodiesterase PdeL of Escherichia coli (strain K12).